The primary structure comprises 118 residues: Large ribosomal subunit protein bL17 (118 aa).

Belongs to the bacterial ribosomal protein bL17 family. In terms of assembly, part of the 50S ribosomal subunit. Contacts protein L32.

This Hydrogenobaculum sp. (strain Y04AAS1) protein is Large ribosomal subunit protein bL17.